A 1203-amino-acid chain; its full sequence is DNA-directed RNA polymerase subunit beta (1203 aa).

Basic and acidic residues predominate over residues 1174-1195 (AAQEAKAAFEAEEAEKATKAEA). Residues 1174 to 1203 (AAQEAKAAFEAEEAEKATKAEATEEAAEQE) form a disordered region.

This sequence belongs to the RNA polymerase beta chain family. As to quaternary structure, the RNAP catalytic core consists of 2 alpha, 1 beta, 1 beta' and 1 omega subunit. When a sigma factor is associated with the core the holoenzyme is formed, which can initiate transcription.

The catalysed reaction is RNA(n) + a ribonucleoside 5'-triphosphate = RNA(n+1) + diphosphate. Functionally, DNA-dependent RNA polymerase catalyzes the transcription of DNA into RNA using the four ribonucleoside triphosphates as substrates. The protein is DNA-directed RNA polymerase subunit beta of Streptococcus pneumoniae (strain P1031).